We begin with the raw amino-acid sequence, 194 residues long: GIDENVCTMKLRENIKSPQEADFYNPKAGRITTANSQKLPALRSLQMSAERGFLYSNGIYAPHWNINAHSALYVTRGNAKVQVVGDEGNKVFDDEVKQGQLIIVPQYFAVIKKAGNQGFEYVAFKTNDNAMINPLVGRLSAFRAIPEEVLRSSFQISSEEAEELKYGRQEALLLSEQSQQGKREVADEKERERF.

The Cupin type-1 domain maps to 13 to 162; the sequence is ENIKSPQEAD…SFQISSEEAE (150 aa).

This sequence belongs to the 11S seed storage protein (globulins) family. Hexamer; each subunit is composed of an acidic and a basic chain derived from a single precursor and linked by a disulfide bond. As to expression, cotyledons and endosperm protein bodies.

Seed storage protein with a relatively high level of Lys and Met. The polypeptide is 13S globulin basic chain (Fagopyrum esculentum (Common buckwheat)).